Reading from the N-terminus, the 430-residue chain is Serine--tRNA ligase (430 aa).

237-239 (TAE) provides a ligand contact to L-serine. Residue 268–270 (RSE) participates in ATP binding. Position 291 (glutamate 291) interacts with L-serine. 355–358 (EISS) provides a ligand contact to ATP. Serine 391 contacts L-serine.

The protein belongs to the class-II aminoacyl-tRNA synthetase family. Type-1 seryl-tRNA synthetase subfamily. Homodimer. The tRNA molecule binds across the dimer.

It localises to the cytoplasm. It carries out the reaction tRNA(Ser) + L-serine + ATP = L-seryl-tRNA(Ser) + AMP + diphosphate + H(+). The enzyme catalyses tRNA(Sec) + L-serine + ATP = L-seryl-tRNA(Sec) + AMP + diphosphate + H(+). Its pathway is aminoacyl-tRNA biosynthesis; selenocysteinyl-tRNA(Sec) biosynthesis; L-seryl-tRNA(Sec) from L-serine and tRNA(Sec): step 1/1. Its function is as follows. Catalyzes the attachment of serine to tRNA(Ser). Is also able to aminoacylate tRNA(Sec) with serine, to form the misacylated tRNA L-seryl-tRNA(Sec), which will be further converted into selenocysteinyl-tRNA(Sec). This is Serine--tRNA ligase from Yersinia enterocolitica serotype O:8 / biotype 1B (strain NCTC 13174 / 8081).